We begin with the raw amino-acid sequence, 115 residues long: UPF0127 protein PH1112 (115 aa).

This sequence belongs to the UPF0127 family.

The sequence is that of UPF0127 protein PH1112 from Pyrococcus horikoshii (strain ATCC 700860 / DSM 12428 / JCM 9974 / NBRC 100139 / OT-3).